The chain runs to 751 residues: ABC transporter G family member 22 (751 aa).

Residues 26–81 are disordered; that stretch reads ADIRSPHGSMDANGVPATAPAAVGGGGTLSRKSSRRLMGMSPGRSSGAGTHIRKSR. The ABC transporter domain occupies 157 to 403; the sequence is LKFRDVTYKV…FSSIGCSPLI (247 aa). 197 to 204 serves as a coordination point for ATP; that stretch reads GPSGSGKT. An ABC transmembrane type-2 domain is found at 498–707; it reads EQYCILFCRG…TYKLLLKVQY (210 aa). The next 6 membrane-spanning stretches (helical) occupy residues 516-536, 552-572, 602-622, 634-654, 666-686, and 722-742; these read FSWL…LLWW, LLFF…IFAF, LPLD…MTGL, LTVF…GAIL, VTVM…PVFI, and GLTE…LAYL.

Belongs to the ABC transporter superfamily. ABCG family. Eye pigment precursor importer (TC 3.A.1.204) subfamily.

The protein resides in the membrane. The chain is ABC transporter G family member 22 (ABCG22) from Arabidopsis thaliana (Mouse-ear cress).